The following is a 200-amino-acid chain: GTP-binding protein rho2 (200 aa).

Position 15–22 (15–22) interacts with GTP; it reads GDGACGKT. Residues 37-45 carry the Effector region motif; that stretch reads YVPTVFENY. Residues 62-66 and 120-123 contribute to the GTP site; these read DTAGQ and MKAD. Cys-197 bears the Cysteine methyl ester mark. A lipid anchor (S-geranylgeranyl cysteine) is attached at Cys-197. Residues 198 to 200 constitute a propeptide, removed in mature form; sequence IIS.

This sequence belongs to the small GTPase superfamily. Rho family. Interacts with pck2.

It is found in the cell membrane. Involved in cell morphogenesis, the maintenance of growth direction, control of polarity and of cell wall integrity. Regulates the synthesis of alpha-D-glucan through activation of pck2. This Schizosaccharomyces pombe (strain 972 / ATCC 24843) (Fission yeast) protein is GTP-binding protein rho2 (rho2).